Here is a 370-residue protein sequence, read N- to C-terminus: Actin-related protein 2/3 complex subunit 1A (370 aa).

WD repeat units lie at residues 6–45, 50–89, 140–179, 202–241, 244–284, and 322–365; these read FLLE…WVKA, EHNG…WKPT, PIRS…VDEK, GTGG…QVST, TEFL…TFVS, and LHQN…SSIQ.

The protein belongs to the WD repeat ARPC1 family. Probable component of the Arp2/3 complex in which it may replace ARPC1B.

The protein resides in the cytoplasm. The protein localises to the cytoskeleton. It localises to the nucleus. Its function is as follows. Probably functions as a component of the Arp2/3 complex which is involved in regulation of actin polymerization and together with an activating nucleation-promoting factor (NPF) mediates the formation of branched actin networks. In addition to its role in the cytoplasmic cytoskeleton, the Arp2/3 complex also promotes actin polymerization in the nucleus, thereby regulating gene transcription and repair of damaged DNA. This Bos taurus (Bovine) protein is Actin-related protein 2/3 complex subunit 1A (ARPC1A).